Reading from the N-terminus, the 89-residue chain is Large ribosomal subunit protein bL28 (89 aa).

It belongs to the bacterial ribosomal protein bL28 family.

The protein is Large ribosomal subunit protein bL28 of Chlamydia felis (strain Fe/C-56) (Chlamydophila felis).